The chain runs to 183 residues: Protein Syd (183 aa).

It belongs to the Syd family.

Its subcellular location is the cell inner membrane. Interacts with the SecY protein in vivo. May bind preferentially to an uncomplexed state of SecY, thus functioning either as a chelating agent for excess SecY in the cell or as a regulatory factor that negatively controls the translocase function. This is Protein Syd from Aliivibrio fischeri (strain MJ11) (Vibrio fischeri).